The chain runs to 901 residues: PGC-1 and ERR-induced regulator in muscle protein 1 (901 aa).

3 disordered regions span residues 29–511 (QAGL…MPAS), 564–671 (SLEG…MGPG), and 731–752 (RHQEGRSQAPLLKAGSVPAPPP). A compositionally biased stretch (polar residues) spans 100–112 (GQQTPSTSAQSEA). The span at 157 to 178 (GEPAGSPESPVHSAAPQRSPGS) shows a compositional bias: low complexity. Polar residues-rich tracts occupy residues 267–276 (LSTSVSTTEQ), 347–379 (DESQSTSAFNAQPNEPQSTPTFSPQPDEPQSTP), 387–418 (EPQSTSAFNAQPNEPQSTLAFSPQPDEPQSTP), 426–457 (EPQSTPAFNVQPNEPQSTPAFSPQPNEPQSTP), and 465–484 (EPQSTPAFNTQPNEPQSTPT). The segment covering 608 to 624 (PSSEEPGSGEVSGPLSP) has biased composition (low complexity).

It localises to the cytoplasm. Its subcellular location is the nucleus. Regulates the expression of selective PPARGC1A/B and ESRRA/B/G target genes with roles in glucose and lipid metabolism, energy transfer, contractile function, muscle mitochondrial biogenesis and oxidative capacity. Required for the efficient induction of MT-CO2, MT-CO3, COX4I1, TFB1M, TFB2M, POLRMT and SIRT3 by PPARGC1A. Positively regulates the PPARGC1A/ESRRG-induced expression of CKMT2, TNNI3 and SLC2A4 and negatively regulates the PPARGC1A/ESRRG-induced expression of PDK4. The sequence is that of PGC-1 and ERR-induced regulator in muscle protein 1 (PERM1) from Bos taurus (Bovine).